Consider the following 309-residue polypeptide: Ribonuclease Z (309 aa).

The Zn(2+) site is built by histidine 63, histidine 65, aspartate 67, histidine 68, histidine 145, aspartate 216, and histidine 274. The active-site Proton acceptor is aspartate 67.

The protein belongs to the RNase Z family. In terms of assembly, homodimer. Zn(2+) serves as cofactor.

It carries out the reaction Endonucleolytic cleavage of RNA, removing extra 3' nucleotides from tRNA precursor, generating 3' termini of tRNAs. A 3'-hydroxy group is left at the tRNA terminus and a 5'-phosphoryl group is left at the trailer molecule.. Zinc phosphodiesterase, which displays some tRNA 3'-processing endonuclease activity. Probably involved in tRNA maturation, by removing a 3'-trailer from precursor tRNA. This is Ribonuclease Z from Streptococcus mutans serotype c (strain ATCC 700610 / UA159).